The primary structure comprises 445 residues: rRNA methyltransferase 3B, mitochondrial (445 aa).

Residues Met1–Ala37 constitute a mitochondrion transit peptide. 2 disordered regions span residues Glu52–Val90 and His311–Gly334. Polar residues-rich tracts occupy residues Val54–Thr70, Ile78–Val90, and His311–Pro324. Residues Gly387, Ile411, and Leu420 each coordinate S-adenosyl-L-methionine.

It belongs to the class IV-like SAM-binding methyltransferase superfamily. RNA methyltransferase TrmH family.

It localises to the mitochondrion. The enzyme catalyses a uridine in rRNA + S-adenosyl-L-methionine = a 2'-O-methyluridine in rRNA + S-adenosyl-L-homocysteine + H(+). S-adenosyl-L-methionine-dependent 2'-O-ribose methyltransferase that catalyzes the formation of 2'-O-methylguanosine at position 1485 (Gm1485) in the mitochondrial large subunit ribosomal RNA (mtLSU rRNA), a conserved modification in the peptidyl transferase domain of the mtLSU rRNA. Also required for formation of 2'-O-methyluridine at position 1484 (Um1484) mediated by MRM2. This is rRNA methyltransferase 3B, mitochondrial from Danio rerio (Zebrafish).